The following is a 102-amino-acid chain: NADH-quinone oxidoreductase subunit K (102 aa).

The next 3 membrane-spanning stretches (helical) occupy residues 5 to 25, 31 to 51, and 65 to 85; these read LSHY…GIFL, IVIL…MVAF, and LFIL…LVVF.

Belongs to the complex I subunit 4L family. NDH-1 is composed of 14 different subunits. Subunits NuoA, H, J, K, L, M, N constitute the membrane sector of the complex.

The protein localises to the cell inner membrane. The enzyme catalyses a quinone + NADH + 5 H(+)(in) = a quinol + NAD(+) + 4 H(+)(out). NDH-1 shuttles electrons from NADH, via FMN and iron-sulfur (Fe-S) centers, to quinones in the respiratory chain. The immediate electron acceptor for the enzyme in this species is believed to be ubiquinone. Couples the redox reaction to proton translocation (for every two electrons transferred, four hydrogen ions are translocated across the cytoplasmic membrane), and thus conserves the redox energy in a proton gradient. The polypeptide is NADH-quinone oxidoreductase subunit K (Rhizobium johnstonii (strain DSM 114642 / LMG 32736 / 3841) (Rhizobium leguminosarum bv. viciae)).